The following is a 547-amino-acid chain: RNA polymerase sigma factor sigF, chloroplastic (547 aa).

The span at 1 to 17 shows a compositional bias: polar residues; sequence MEATRNLVSSSPSFQTK. Disordered regions lie at residues 1–28 and 54–79; these read MEAT…SSPS and FPAS…DDRT. Residues 1–55 constitute a chloroplast transit peptide; it reads MEATRNLVSSSPSFQTKTHLKSSYSSPSSVVMLHDQTTTPVVNSRHLNSLSRHFP. Over residues 62 to 79 the composition is skewed to basic and acidic residues; the sequence is EPREESRPLSHALRDDRT. Phosphoserine; by CK2 is present on residues Ser94, Ser95, Ser174, Ser176, Ser177, and Ser180. Positions 163–226 are disordered; sequence ANPSDNIKDS…QKTSAKKKYK (64 aa). Residues 172–181 are compositionally biased toward low complexity; it reads SLSTSSSMSL. At Thr249 the chain carries Phosphothreonine; by CK2. Positions 335–348 match the Polymerase core binding motif; that stretch reads DLLQEGSMGLMKSV. A DNA-binding region (H-T-H motif) is located at residues 505–524; the sequence is LSEIGEIYGLSKERVRQLES.

It belongs to the sigma-70 factor family. Interacts (via N-terminus) with DG1 (via C-terminus). Phosphorylated to acquire sigma activity; site-specific phosphorylation regulates promoter affinity. Phosphorylation at Ser-174 by chloroplastic CK2 requires prior phosphorylation at Ser-177. Phosphorylation at either Ser-94, Ser-95 or Ser-174 is required for sigma activation. Expressed in seedling, accumulating progressively. Present in leaves but not in roots.

The protein localises to the plastid. The protein resides in the chloroplast. Its function is as follows. Sigma factors are initiation factors that promote the attachment of plastid-encoded RNA polymerase (PEP) to specific initiation sites and are then released. Regulates transcription in chloroplast in a DG1-dependent manner. Involved in light-dependent chloroplast development. Required during early plant development and primary leaf formation. The sequence is that of RNA polymerase sigma factor sigF, chloroplastic (SIGF) from Arabidopsis thaliana (Mouse-ear cress).